The sequence spans 406 residues: Zinc finger CCCH domain-containing protein 15 homolog (406 aa).

Residues 1-11 (MPPKKAPAGPS) are compositionally biased toward low complexity. Positions 1–70 (MPPKKAPAGP…DKKKDEKEKK (70 aa)) are disordered. The span at 12-28 (KKTEQKKKEKVIEDKTF) shows a compositional bias: basic and acidic residues. Residues 38 to 50 (QQKFIQQVQKQVQ) are compositionally biased toward low complexity. The segment covering 56–70 (PRQDGDKKKDEKEKK) has biased composition (basic and acidic residues). Residues 57–82 (RQDGDKKKDEKEKKLADLREMASIFK) adopt a coiled-coil conformation. C3H1-type zinc fingers lie at residues 94 to 121 (DPKS…HDLS) and 166 to 203 (PTTE…HALP). The interval 336 to 382 (VDGSGTIASSTRLLDQATEAAKTAAAEDGAASDDENPSSSAPANDAA) is disordered. Low complexity-rich tracts occupy residues 352–364 (ATEA…AEDG) and 372–382 (PSSSAPANDAA).

The protein belongs to the ZC3H15/TMA46 family.

The sequence is that of Zinc finger CCCH domain-containing protein 15 homolog from Drosophila pseudoobscura pseudoobscura (Fruit fly).